Here is a 263-residue protein sequence, read N- to C-terminus: Chymotrypsinogen B (263 aa).

The signal sequence occupies residues Met1 to Gly18. 5 cysteine pairs are disulfide-bonded: Cys19–Cys140, Cys60–Cys76, Cys154–Cys219, Cys186–Cys200, and Cys209–Cys238. In terms of domain architecture, Peptidase S1 spans Ile34–Ala261. His75 serves as the catalytic Charge relay system. Ser93 carries the post-translational modification Phosphoserine. Catalysis depends on Asp120, which acts as the Charge relay system. The Charge relay system role is filled by Ser213.

The protein belongs to the peptidase S1 family.

The protein localises to the secreted. Its subcellular location is the extracellular space. The enzyme catalyses Preferential cleavage: Tyr-|-Xaa, Trp-|-Xaa, Phe-|-Xaa, Leu-|-Xaa.. The chain is Chymotrypsinogen B from Homo sapiens (Human).